The chain runs to 274 residues: Methionine aminopeptidase B (274 aa).

A substrate-binding site is contributed by His-102. Positions 120, 131, and 194 each coordinate a divalent metal cation. His-201 serves as a coordination point for substrate. Residues Glu-227 and Glu-258 each contribute to the a divalent metal cation site.

This sequence belongs to the peptidase M24A family. Methionine aminopeptidase type 1 subfamily. As to quaternary structure, monomer. Co(2+) is required as a cofactor. Zn(2+) serves as cofactor. It depends on Mn(2+) as a cofactor. The cofactor is Fe(2+).

It catalyses the reaction Release of N-terminal amino acids, preferentially methionine, from peptides and arylamides.. Functionally, removes the N-terminal methionine from nascent proteins. The N-terminal methionine is often cleaved when the second residue in the primary sequence is small and uncharged (Met-Ala-, Cys, Gly, Pro, Ser, Thr, or Val). Requires deformylation of the N(alpha)-formylated initiator methionine before it can be hydrolyzed. In Synechocystis sp. (strain ATCC 27184 / PCC 6803 / Kazusa), this protein is Methionine aminopeptidase B.